Consider the following 570-residue polypeptide: Methionine--tRNA ligase (570 aa).

The 'HIGH' region motif lies at 14-24 (PYINGIKHLGN). Zn(2+) contacts are provided by Cys-146, Cys-149, Cys-159, and Cys-162. A 'KMSKS' region motif is present at residues 347–351 (QFSTS). Residue Thr-350 coordinates ATP.

Belongs to the class-I aminoacyl-tRNA synthetase family. MetG type 1 subfamily. In terms of assembly, monomer. It depends on Zn(2+) as a cofactor.

The protein resides in the cytoplasm. The enzyme catalyses tRNA(Met) + L-methionine + ATP = L-methionyl-tRNA(Met) + AMP + diphosphate. Functionally, is required not only for elongation of protein synthesis but also for the initiation of all mRNA translation through initiator tRNA(fMet) aminoacylation. This Jannaschia sp. (strain CCS1) protein is Methionine--tRNA ligase.